Reading from the N-terminus, the 612-residue chain is Amyloid-beta precursor-like protein (612 aa).

The signal sequence occupies residues 1–21 (MGPSVRPGFLVVVIGLQFVAA). Over 22-542 (SMEVNSRKFE…NLYANSHANS (521 aa)) the chain is Extracellular. The segment at 28-122 (RKFEPMVAFI…PFRCLVGPFQ (95 aa)) is GFLD subdomain. Positions 28 to 189 (RKFEPMVAFI…SGVEFVCCPK (162 aa)) constitute an E1 domain. Cystine bridges form between C38–C60, C71–C116, C96–C103, C132–C187, C143–C173, and C157–C186. N-linked (GlcNAc...) asparagine glycosylation is found at N99, N108, and N150. The cuBD subdomain stretch occupies residues 130-189 (EHCIFDHYHDPRVCNEFDQCNETAMSKCSARGMTTQSFAMLWPCQEPGHFSGVEFVCCPK). One can recognise an E2 domain in the interval 223-419 (GDSKYMSKYA…KQVRPNIDKF (197 aa)). Disordered regions lie at residues 251–276 (ERDTKMMKDWKAARDSVREKKKTDPK) and 437–490 (QEPT…FDSE). Basic and acidic residues-rich tracts occupy residues 439-453 (PTPKEAPVETQKAED) and 470-483 (KPTEARPEQQEDIK). The helical transmembrane segment at 543–563 (VLGIAIGGVVVFIIIVVAVVM) threads the bilayer. Over 564–612 (LKRRTQRQRVTHGFVEVDPAASPEERHVANMQMSGYENPTYKYFEMQNQ) the chain is Cytoplasmic. The required for the interaction with kinesin heavy chain and for anterograde transport in axons stretch occupies residues 598-612 (GYENPTYKYFEMQNQ). The short motif at 599–604 (YENPTY) is the YENPXY motif element.

It belongs to the APP family. As to quaternary structure, interacts (via cytoplasmic domain) with kinesin heavy chain. Expressed in the cervicothoracic ganglion (stellate ganglion) (at protein level).

It is found in the cell membrane. Its subcellular location is the cell projection. The protein resides in the axon. In terms of biological role, acts as a kinesin I membrane receptor, thereby playing a role in axonal anterograde transport of cargo towards synapses in axons. The chain is Amyloid-beta precursor-like protein from Doryteuthis pealeii (Longfin inshore squid).